The chain runs to 569 residues: Sulfite reductase [NADPH] hemoprotein beta-component (569 aa).

[4Fe-4S] cluster is bound by residues C433, C439, C478, and C482. C482 lines the siroheme pocket.

This sequence belongs to the nitrite and sulfite reductase 4Fe-4S domain family. As to quaternary structure, alpha(8)-beta(8). The alpha component is a flavoprotein, the beta component is a hemoprotein. Requires siroheme as cofactor. [4Fe-4S] cluster serves as cofactor.

It carries out the reaction hydrogen sulfide + 3 NADP(+) + 3 H2O = sulfite + 3 NADPH + 4 H(+). The protein operates within sulfur metabolism; hydrogen sulfide biosynthesis; hydrogen sulfide from sulfite (NADPH route): step 1/1. In terms of biological role, component of the sulfite reductase complex that catalyzes the 6-electron reduction of sulfite to sulfide. This is one of several activities required for the biosynthesis of L-cysteine from sulfate. This Buchnera aphidicola subsp. Acyrthosiphon pisum (strain Tuc7) protein is Sulfite reductase [NADPH] hemoprotein beta-component.